Consider the following 411-residue polypeptide: MSGINKIVLAYSGGLDTSAIIPWLKENYDAEIIAFVADVGQERDDLEGIEQKAIASGATKCIVKDLREEFVKEYVYPTLKTGAVYEGTYLLGTSMARPVIAKAMVEAALAEGADAISHGCTGKGNDQVRFEGAVAALAPQLKVIAPWRLWDMRSREDLLAYLETRNIPCKATLKKIYSRDANAWHISTEGGELESTWNEPSEAVWQWTVPAEQAPDQPEYVKLTVAQGEVVAVDDQPLSPHQILTTLNERAGKHGVGRIDITENRMVGMKSRGCYETPGGTVMVAALRAVEELVLDRPTRAWREKLGAEFSHLVYDGRWFTPLCKAIVASANAIAEDLDGEVVLKMYKGQVTAVQKKSPNSLYSEDFATFGADEVYDQSHAEGFIRLYTLASRIRAMKEQHQAIGGDHTHG.

ATP is bound by residues 10–18 (AYSGGLDTS) and Ala37. 2 residues coordinate L-citrulline: Tyr89 and Ser94. Position 119 (Gly119) interacts with ATP. Residues Thr121, Asn125, and Asp126 each coordinate L-aspartate. Position 125 (Asn125) interacts with L-citrulline. L-citrulline is bound by residues Arg129, Ser178, Ser187, Glu263, and Tyr275.

This sequence belongs to the argininosuccinate synthase family. Type 1 subfamily. As to quaternary structure, homotetramer.

The protein localises to the cytoplasm. The catalysed reaction is L-citrulline + L-aspartate + ATP = 2-(N(omega)-L-arginino)succinate + AMP + diphosphate + H(+). Its pathway is amino-acid biosynthesis; L-arginine biosynthesis; L-arginine from L-ornithine and carbamoyl phosphate: step 2/3. The chain is Argininosuccinate synthase from Aeromonas hydrophila subsp. hydrophila (strain ATCC 7966 / DSM 30187 / BCRC 13018 / CCUG 14551 / JCM 1027 / KCTC 2358 / NCIMB 9240 / NCTC 8049).